Consider the following 661-residue polypeptide: MAPDISCFFLVALFLASCRATTSSDQKCIEKEVNKTYNCENLGLNEIPGTLPNSTECLEFSFNVLPTIQNTTFSRLINLTFLDLTRCQIYWIHEDTFQSQHRLDTLVLTANPLIFMAETALSGPKALKHLFFIQTGISSIDFIPLHNQKTLESLYLGSNHISSIKLPKGFPTEKLKVLDFQNNAIHYLSKEDMSSLQQATNLSLNLNGNDIAGIELGAFDSAVFQSLNFGGTQNLLVIFKGLKNSTIQSLWLGTFEDMDDEDISPAVFEGLCEMSVESINLQKHYFFNISSNTFHCFSGLQELDLTATHLSELPSGLVGLSTLKKLVLSANKFENLCQISASNFPSLTHLSIKGNTKRLELGTGCLENLENLRELDLSHDDIETSDCCNLQLRNLSHLQSLNLSYNEPLSLKTEAFKECPQLELLDLAFTRLKVKDAQSPFQNLHLLKVLNLSHSLLDISSEQLFDGLPALQHLNLQGNHFPKGNIQKTNSLQTLGRLEILVLSFCDLSSIDQHAFTSLKMMNHVDLSHNRLTSSSIEALSHLKGIYLNLASNRISIILPSLLPILSQQRTINLRQNPLDCTCSNIYFLEWYKENMQKLEDTEDTLCENPPLLRGVRLSDVTLSCSMAAVGIFFLIVFLLVFAILLIFAVKYFLRWKYQHI.

The first 20 residues, 1–20 (MAPDISCFFLVALFLASCRA), serve as a signal peptide directing secretion. Over 21-626 (TTSSDQKCIE…RLSDVTLSCS (606 aa)) the chain is Extracellular. Residues 33 to 53 (VNKTYNCENLGLNEIPGTLPN) form the LRRNT domain. 4 N-linked (GlcNAc...) asparagine glycosylation sites follow: Asn-34, Asn-53, Asn-70, and Asn-78. LRR repeat units lie at residues 54–75 (STEC…TFSR), 78–99 (NLTF…TFQS), 102–123 (RLDT…ALSG), 126–147 (ALKH…PLHN), 150–171 (TLES…KGFP), 174–195 (KLKV…DMSS), and 201–221 (NLSL…AFDS). Asn-201, Asn-244, and Asn-288 each carry an N-linked (GlcNAc...) asparagine glycan. LRR repeat units lie at residues 275–296 (SVES…TFHC), 299–321 (GLQE…VGLS), 322–343 (TLKK…SASN), 346–366 (SLTH…TGCL), and 371–391 (NLRE…CNLQ). N-linked (GlcNAc...) asparagine glycans are attached at residues Asn-394 and Asn-402. LRR repeat units lie at residues 397 to 418 (HLQS…AFKE), 421 to 442 (QLEL…SPFQ), 446 to 466 (LLKV…QLFD), 470 to 493 (ALQH…NSLQ), 497 to 518 (RLEI…AFTS), 521 to 544 (MMNH…SHLK), and 546 to 566 (IYLN…LPIL). The N-linked (GlcNAc...) asparagine glycan is linked to Asn-451. In terms of domain architecture, LRRCT spans 577 to 627 (NPLDCTCSNIYFLEWYKENMQKLEDTEDTLCENPPLLRGVRLSDVTLSCSM). The helical transmembrane segment at 627 to 650 (MAAVGIFFLIVFLLVFAILLIFAV) threads the bilayer. At 651-661 (KYFLRWKYQHI) the chain is on the cytoplasmic side.

The protein belongs to the Toll-like receptor family. As to quaternary structure, M-shaped tetramer of two CD180-LY86 heterodimers. As to expression, B-lymphocytes and spleen. Not detected in thymus, kidney, muscle, heart, brain or liver.

Its subcellular location is the cell membrane. Its function is as follows. May cooperate with MD-1 and TLR4 to mediate the innate immune response to bacterial lipopolysaccharide (LPS) in B-cells. Leads to NF-kappa-B activation. Also involved in the life/death decision of B-cells. The protein is CD180 antigen (Cd180) of Mus musculus (Mouse).